The chain runs to 240 residues: MRWKDEGIIIAAKKYGDKNLILSLFTKNHGKRRGLTKLTNNSNYKFQISNLLHAEWSAKLPENLGFLKCELIESPFHHFFQDRLKSITIVSFSSILEKVLPESEPCAMLYDNLRYFIDVIKHNNQSWQSHYLNLELLLLTQLGFKLDLSKCAVTGVKENLQFISPKTGRAVSKKVGDYYADKLLPFPQMLHDVYNNNLQNSYSFQEFQLGLKVTGYFLNKYLFLQLNVKFPELRNLMLSL.

It belongs to the RecO family.

Involved in DNA repair and RecF pathway recombination. In Wolbachia pipientis wMel, this protein is DNA repair protein RecO.